The sequence spans 343 residues: Protein RecA (343 aa).

65–72 provides a ligand contact to ATP; it reads GPESSGKT.

Belongs to the RecA family.

It localises to the cytoplasm. Functionally, can catalyze the hydrolysis of ATP in the presence of single-stranded DNA, the ATP-dependent uptake of single-stranded DNA by duplex DNA, and the ATP-dependent hybridization of homologous single-stranded DNAs. It interacts with LexA causing its activation and leading to its autocatalytic cleavage. This is Protein RecA from Pseudoalteromonas atlantica (strain T6c / ATCC BAA-1087).